The chain runs to 279 residues: MITGRTALYGVLGNPVRHSRSPQMQAAAFEHLGLDATYVALPVEPERLPAAVAGAHALGFQGLNVTVPHKRAVVALCEAVDPVAREVGAVNTLRRTERGWEGFNTDAAACLMLLREEGLRPGAPALLAGAGGAARAAAWALVRAGAVLRIAARRQDAAERLAAELGPLAGPGTPAPVAVPWGALEAEADAAEAVVNGTTVGLHPEDAPLPLRVRAGQLVADFVYGDTPLARAARDAGARLVSGERILVRQGALSFALWTGRAAPEALMAAAIAAPGRAT.

Residues 19–21 (SRS) and Thr66 contribute to the shikimate site. The active-site Proton acceptor is the Lys70. Positions 91 and 106 each coordinate shikimate. Residues 129–133 (GAGGA) and Phe222 contribute to the NADP(+) site. Tyr224 provides a ligand contact to shikimate. Gly243 serves as a coordination point for NADP(+).

The protein belongs to the shikimate dehydrogenase family. In terms of assembly, homodimer.

It carries out the reaction shikimate + NADP(+) = 3-dehydroshikimate + NADPH + H(+). The protein operates within metabolic intermediate biosynthesis; chorismate biosynthesis; chorismate from D-erythrose 4-phosphate and phosphoenolpyruvate: step 4/7. Involved in the biosynthesis of the chorismate, which leads to the biosynthesis of aromatic amino acids. Catalyzes the reversible NADPH linked reduction of 3-dehydroshikimate (DHSA) to yield shikimate (SA). The sequence is that of Shikimate dehydrogenase (NADP(+)) from Anaeromyxobacter sp. (strain Fw109-5).